The chain runs to 187 residues: UPF0200 protein PYRAB09750 (187 aa).

7 to 14 (GMPGSGKG) is an ATP binding site.

This sequence belongs to the UPF0200 family.

The polypeptide is UPF0200 protein PYRAB09750 (Pyrococcus abyssi (strain GE5 / Orsay)).